A 190-amino-acid chain; its full sequence is Xanthine phosphoribosyltransferase (190 aa).

Xanthine-binding residues include L20 and N27. Position 128–132 (128–132 (ANGEA)) interacts with 5-phospho-alpha-D-ribose 1-diphosphate. K156 contributes to the xanthine binding site.

This sequence belongs to the purine/pyrimidine phosphoribosyltransferase family. Xpt subfamily. As to quaternary structure, homodimer.

It is found in the cytoplasm. The catalysed reaction is XMP + diphosphate = xanthine + 5-phospho-alpha-D-ribose 1-diphosphate. Its pathway is purine metabolism; XMP biosynthesis via salvage pathway; XMP from xanthine: step 1/1. Its function is as follows. Converts the preformed base xanthine, a product of nucleic acid breakdown, to xanthosine 5'-monophosphate (XMP), so it can be reused for RNA or DNA synthesis. This Clostridium botulinum (strain Eklund 17B / Type B) protein is Xanthine phosphoribosyltransferase.